Reading from the N-terminus, the 490-residue chain is Betaine aldehyde dehydrogenase (490 aa).

Positions 27 and 93 each coordinate K(+). 150–152 (GAW) is an NAD(+) binding site. Lys162 (charge relay system) is an active-site residue. 176–179 (KPSE) serves as a coordination point for NAD(+). Val180 contributes to the K(+) binding site. 230 to 233 (GTDT) contacts NAD(+). Position 246 (Leu246) interacts with K(+). Glu252 (proton acceptor) is an active-site residue. NAD(+) is bound by residues Gly254, Cys286, and Glu387. The active-site Nucleophile is Cys286. The residue at position 286 (Cys286) is a Cysteine sulfenic acid (-SOH). K(+) contacts are provided by Lys457 and Gly460. The Charge relay system role is filled by Glu464.

Belongs to the aldehyde dehydrogenase family. Dimer of dimers. K(+) serves as cofactor.

The catalysed reaction is betaine aldehyde + NAD(+) + H2O = glycine betaine + NADH + 2 H(+). Its pathway is amine and polyamine biosynthesis; betaine biosynthesis via choline pathway; betaine from betaine aldehyde: step 1/1. In terms of biological role, involved in the biosynthesis of the osmoprotectant glycine betaine. Catalyzes the irreversible oxidation of betaine aldehyde to the corresponding acid. The chain is Betaine aldehyde dehydrogenase from Pseudomonas syringae pv. syringae (strain B728a).